The chain runs to 308 residues: Methionyl-tRNA formyltransferase (308 aa).

Residue 110–113 (SLLP) participates in (6S)-5,6,7,8-tetrahydrofolate binding.

It belongs to the Fmt family.

The enzyme catalyses L-methionyl-tRNA(fMet) + (6R)-10-formyltetrahydrofolate = N-formyl-L-methionyl-tRNA(fMet) + (6S)-5,6,7,8-tetrahydrofolate + H(+). Attaches a formyl group to the free amino group of methionyl-tRNA(fMet). The formyl group appears to play a dual role in the initiator identity of N-formylmethionyl-tRNA by promoting its recognition by IF2 and preventing the misappropriation of this tRNA by the elongation apparatus. The polypeptide is Methionyl-tRNA formyltransferase (Neisseria meningitidis serogroup B (strain ATCC BAA-335 / MC58)).